The primary structure comprises 70 residues: Sec-independent protein translocase protein TatA (70 aa).

Residues 1–21 traverse the membrane as a helical segment; sequence MGIGVWELLLLFLIVLVVFGT. The tract at residues 42 to 70 is disordered; the sequence is MSENEDKPSEGGARTLEGEVVDKKEKDKV. Basic and acidic residues predominate over residues 57 to 70; sequence LEGEVVDKKEKDKV.

This sequence belongs to the TatA/E family. As to quaternary structure, the Tat system comprises two distinct complexes: a TatABC complex, containing multiple copies of TatA, TatB and TatC subunits, and a separate TatA complex, containing only TatA subunits. Substrates initially bind to the TatABC complex, which probably triggers association of the separate TatA complex to form the active translocon.

It localises to the cell inner membrane. Its function is as follows. Part of the twin-arginine translocation (Tat) system that transports large folded proteins containing a characteristic twin-arginine motif in their signal peptide across membranes. TatA could form the protein-conducting channel of the Tat system. In Methylococcus capsulatus (strain ATCC 33009 / NCIMB 11132 / Bath), this protein is Sec-independent protein translocase protein TatA.